The chain runs to 494 residues: Potassium voltage-gated channel subfamily A member 2 (494 aa).

Residues methionine 1–aspartate 25 form a disordered region. Residues methionine 1–leucine 124 are tetramerization domain. Residues methionine 1–glycine 159 lie on the Cytoplasmic side of the membrane. A helical transmembrane segment spans residues proline 160–leucine 181. Over glutamate 182 to proline 216 the chain is Extracellular. Asparagine 203 carries N-linked (GlcNAc...) asparagine glycosylation. Residues phenylalanine 217–alanine 238 traverse the membrane as a helical segment. Residue cysteine 239 is the site of S-palmitoyl cysteine attachment. At cysteine 239 to valine 249 the chain is on the cytoplasmic side. The chain crosses the membrane as a helical span at residues methionine 250–alanine 270. Topologically, residues glutamate 271–serine 284 are extracellular. Residues leucine 285–histidine 305 form a helical; Voltage-sensor membrane-spanning segment. Topologically, residues serine 306 to methionine 320 are cytoplasmic. The segment at lysine 307–methionine 320 is S4-S5 linker. Residues arginine 321–tyrosine 342 traverse the membrane as a helical segment. The Extracellular segment spans residues phenylalanine 343 to isoleucine 356. An intramembrane region (helical) is located at residues proline 357–threonine 368. Positions threonine 369 to aspartate 374 match the Selectivity filter motif. An intramembrane segment occupies threonine 369–valine 376. Over proline 377–lysine 383 the chain is Extracellular. The chain crosses the membrane as a helical span at residues isoleucine 384–tyrosine 412. Residues histidine 413–valine 494 are Cytoplasmic-facing. Positions threonine 492–valine 494 match the PDZ-binding motif.

This sequence belongs to the potassium channel family. A (Shaker) (TC 1.A.1.2) subfamily. Kv1.2/KCNA2 sub-subfamily. In terms of assembly, homotetramer and heterotetramer with other family members. Expressed in oligodendrocytes.

The protein localises to the cell membrane. It carries out the reaction K(+)(in) = K(+)(out). Functionally, voltage-gated potassium channel that mediates transmembrane potassium transport in excitable membranes, primarily in the brain and central nervous system. Prevents aberrant action potential firing and regulates neuronal output. Forms tetrameric potassium-selective channels through which potassium ions pass in accordance with their electrochemical gradient. The channel alternates between opened and closed conformations in response to the voltage difference across the membrane. Can form functional homotetrameric channels and heterotetrameric channels with other family members; the channels characteristics depend critically on the types of channel-forming alpha subunits that are present. Channel properties are modulated by cytoplasmic beta subunits that regulate the subcellular location of the alpha subunits. In vivo, membranes probably contain a mixture of heteromeric potassium channel complexes, making it difficult to assign currents observed in intact tissues to any particular potassium channel family member. Homotetrameric KCNA2 forms a delayed-rectifier potassium channel that opens in response to membrane depolarization, followed by slow spontaneous channel closure. Regulates neuronal excitability and plays a role as pacemaker in the regulation of neuronal action potentials. KCNA2-containing channels play a presynaptic role and prevent hyperexcitability and aberrant action potential firing. Response to toxins that are selective for KCNA2-containing potassium channels suggests that in Purkinje cells, dendritic subthreshold KCNA2-containing potassium channels prevent random spontaneous calcium spikes, suppressing dendritic hyperexcitability without hindering the generation of somatic action potentials, and thereby play an important role in motor coordination. Plays a role in the induction of long-term potentiation of neuron excitability in the CA3 layer of the hippocampus. The chain is Potassium voltage-gated channel subfamily A member 2 (kcna2) from Oncorhynchus mykiss (Rainbow trout).